The primary structure comprises 597 residues: Arginine--tRNA ligase (597 aa).

The short motif at 138-148 (ANPTGPMHVGH) is the 'HIGH' region element.

Belongs to the class-I aminoacyl-tRNA synthetase family. As to quaternary structure, monomer.

Its subcellular location is the cytoplasm. The catalysed reaction is tRNA(Arg) + L-arginine + ATP = L-arginyl-tRNA(Arg) + AMP + diphosphate. The polypeptide is Arginine--tRNA ligase (Rhodopseudomonas palustris (strain HaA2)).